Reading from the N-terminus, the 308-residue chain is 1D-myo-inositol 2-acetamido-2-deoxy-alpha-D-glucopyranoside deacetylase (308 aa).

Residues His13, Asp16, and His147 each coordinate Zn(2+).

Belongs to the MshB deacetylase family. Zn(2+) serves as cofactor.

It catalyses the reaction 1D-myo-inositol 2-acetamido-2-deoxy-alpha-D-glucopyranoside + H2O = 1D-myo-inositol 2-amino-2-deoxy-alpha-D-glucopyranoside + acetate. Catalyzes the deacetylation of 1D-myo-inositol 2-acetamido-2-deoxy-alpha-D-glucopyranoside (GlcNAc-Ins) in the mycothiol biosynthesis pathway. The polypeptide is 1D-myo-inositol 2-acetamido-2-deoxy-alpha-D-glucopyranoside deacetylase (Mycobacterium leprae (strain Br4923)).